The chain runs to 1183 residues: Chromosome partition protein Smc (1183 aa).

32 to 39 (PNGCGKTN) contacts ATP. Coiled coils occupy residues 167–322 (ITRY…ERLN) and 358–497 (AEFE…ALCN). The tract at residues 409 to 442 (KEHLEGSVNRLDQRKRDLERSMEQAEPERRRTSE) is disordered. Positions 419–442 (LDQRKRDLERSMEQAEPERRRTSE) are enriched in basic and acidic residues. Residues 523–632 (LGCLSDLISV…VADLDAAEQL (110 aa)) form the SMC hinge domain. Coiled coils occupy residues 669 to 941 (GKKA…VMER) and 980 to 1025 (NELA…ALEK).

This sequence belongs to the SMC family. Homodimer.

The protein localises to the cytoplasm. Functionally, required for chromosome condensation and partitioning. This Chlorobaculum tepidum (strain ATCC 49652 / DSM 12025 / NBRC 103806 / TLS) (Chlorobium tepidum) protein is Chromosome partition protein Smc.